Consider the following 256-residue polypeptide: Type III pantothenate kinase (256 aa).

An ATP-binding site is contributed by 6 to 13; sequence DCGNTNTV. Position 107 to 110 (107 to 110) interacts with substrate; that stretch reads GPDR. The active-site Proton acceptor is the D109. D129 contacts K(+). Position 132 (T132) interacts with ATP. T184 contributes to the substrate binding site.

It belongs to the type III pantothenate kinase family. Homodimer. The cofactor is NH4(+). K(+) serves as cofactor.

It localises to the cytoplasm. It catalyses the reaction (R)-pantothenate + ATP = (R)-4'-phosphopantothenate + ADP + H(+). Its pathway is cofactor biosynthesis; coenzyme A biosynthesis; CoA from (R)-pantothenate: step 1/5. In terms of biological role, catalyzes the phosphorylation of pantothenate (Pan), the first step in CoA biosynthesis. This Dinoroseobacter shibae (strain DSM 16493 / NCIMB 14021 / DFL 12) protein is Type III pantothenate kinase.